Reading from the N-terminus, the 385-residue chain is Succinate--CoA ligase [ADP-forming] subunit beta (385 aa).

The 229-residue stretch at 9–237 (KEILRQFGVN…LEAEHPLEIE (229 aa)) folds into the ATP-grasp domain. Residues Lys45, 52–54 (GRG), Val94, and Glu101 contribute to the ATP site. Residues Asn192 and Asp206 each contribute to the Mg(2+) site. Residues Asn257 and 314–316 (GIT) contribute to the substrate site.

This sequence belongs to the succinate/malate CoA ligase beta subunit family. In terms of assembly, heterotetramer of two alpha and two beta subunits. Mg(2+) serves as cofactor.

The catalysed reaction is succinate + ATP + CoA = succinyl-CoA + ADP + phosphate. The enzyme catalyses GTP + succinate + CoA = succinyl-CoA + GDP + phosphate. The protein operates within carbohydrate metabolism; tricarboxylic acid cycle; succinate from succinyl-CoA (ligase route): step 1/1. Its function is as follows. Succinyl-CoA synthetase functions in the citric acid cycle (TCA), coupling the hydrolysis of succinyl-CoA to the synthesis of either ATP or GTP and thus represents the only step of substrate-level phosphorylation in the TCA. The beta subunit provides nucleotide specificity of the enzyme and binds the substrate succinate, while the binding sites for coenzyme A and phosphate are found in the alpha subunit. This Deinococcus deserti (strain DSM 17065 / CIP 109153 / LMG 22923 / VCD115) protein is Succinate--CoA ligase [ADP-forming] subunit beta.